The primary structure comprises 303 residues: 4-diphosphocytidyl-2-C-methyl-D-erythritol kinase (303 aa).

The active site involves K24. 111 to 121 (PIASGIGGGSA) is a binding site for ATP. Residue D153 is part of the active site.

Belongs to the GHMP kinase family. IspE subfamily.

It carries out the reaction 4-CDP-2-C-methyl-D-erythritol + ATP = 4-CDP-2-C-methyl-D-erythritol 2-phosphate + ADP + H(+). It functions in the pathway isoprenoid biosynthesis; isopentenyl diphosphate biosynthesis via DXP pathway; isopentenyl diphosphate from 1-deoxy-D-xylulose 5-phosphate: step 3/6. Catalyzes the phosphorylation of the position 2 hydroxy group of 4-diphosphocytidyl-2C-methyl-D-erythritol. The polypeptide is 4-diphosphocytidyl-2-C-methyl-D-erythritol kinase (Rhizobium johnstonii (strain DSM 114642 / LMG 32736 / 3841) (Rhizobium leguminosarum bv. viciae)).